The chain runs to 585 residues: MEVPVGPGPRQAGGGLGATRSSSSGRAARTAEMPWARFSAWLECVCVVTFDLELGQALELVYPSDFRLTDKEKSSICYLAFPDSHSGCLGDTQFSFRMRQCGGQRSLWQVDDRSYNNKAPLALQREPAHYLGYVYFRQVKDSSVKRGYFQKSLVLVSRLPFVRLFQSLLSLIAPEYFEKLAPCLEAVCNEIDQWPAPVPGQTLNLPIMGVVIQVRIPSRVDKLESSPPKQCDQENLLPAPVVLTSVHELDLFRCFRPVLTHVQTLWELMLLGEPLVVLAPSPDVSSELVLALTSCLQPLKFCCDFRPYFTIHDSEFKELTTRTQAPPNVVLGVTNPFFIKTLQHWPHVLRIGEPKMSGDLPKQVKLKKPSRLKTLDTKPGLYTSYTAHLHRDKALLKRLLKGVQKKRPWDVQSALLRRHLLELTQSFIIPLEHYMASLMPLQKNITPWKSPPQICPFRQDDFLRSLEHAGPQLTCILKGDWLGLYRRFFKSPHFDGWYRQRHKEMAQKLEALHLEAICEANIEAWMKDKSEVEVVDLVLKLREKLVRAQGHQLPVKEVTLQRAQLYIDTVIGSLPKDLQAVLCPP.

The span at 1–10 (MEVPVGPGPR) shows a compositional bias: low complexity. Residues 1–25 (MEVPVGPGPRQAGGGLGATRSSSSG) are disordered. The region spanning 43 to 221 (ECVCVVTFDL…IQVRIPSRVD (179 aa)) is the uDENN domain. One can recognise a cDENN domain in the interval 246-373 (VHELDLFRCF…VKLKKPSRLK (128 aa)). Residues 375 to 499 (LDTKPGLYTS…KSPHFDGWYR (125 aa)) enclose the dDENN domain.

The protein belongs to the DENND6 family.

The protein resides in the recycling endosome. It is found in the cytoplasm. Guanine nucleotide exchange factor (GEF) for RAB14. Also has some, lesser GEF activity towards RAB35. This Mus musculus (Mouse) protein is Protein DENND6B (Dennd6b).